Reading from the N-terminus, the 125-residue chain is uncharacterized protein (125 aa).

Its subcellular location is the mitochondrion. This is an uncharacterized protein from Paramecium tetraurelia.